We begin with the raw amino-acid sequence, 95 residues long: Co-chaperonin GroES (95 aa).

The protein belongs to the GroES chaperonin family. Heptamer of 7 subunits arranged in a ring. Interacts with the chaperonin GroEL.

The protein resides in the cytoplasm. Its function is as follows. Together with the chaperonin GroEL, plays an essential role in assisting protein folding. The GroEL-GroES system forms a nano-cage that allows encapsulation of the non-native substrate proteins and provides a physical environment optimized to promote and accelerate protein folding. GroES binds to the apical surface of the GroEL ring, thereby capping the opening of the GroEL channel. The polypeptide is Co-chaperonin GroES (Rickettsia akari (strain Hartford)).